A 363-amino-acid chain; its full sequence is Fructose-bisphosphate aldolase 1 (363 aa).

D34 serves as a coordination point for dihydroxyacetone phosphate. Residues S36 and T39 each coordinate D-glyceraldehyde 3-phosphate. R43 contacts beta-D-fructose 1,6-bisphosphate. K107 serves as a coordination point for D-glyceraldehyde 3-phosphate. Residue K146 participates in dihydroxyacetone phosphate binding. Residue E189 participates in D-glyceraldehyde 3-phosphate binding. Catalysis depends on E189, which acts as the Proton acceptor. Dihydroxyacetone phosphate contacts are provided by K231, S273, and G274. The Schiff-base intermediate with dihydroxyacetone phosphate role is filled by K231. Beta-D-fructose 1,6-bisphosphate contacts are provided by residues 273-275 (SGG) and S301. G303 and R304 together coordinate dihydroxyacetone phosphate. R304 is a beta-D-fructose 1,6-bisphosphate binding site.

It belongs to the class I fructose-bisphosphate aldolase family. Homotetramer. Component of a complex, at least composed of ald-1, microneme protein MIC2 and ACT1. Interacts with microneme protein MIC2 (via cytoplasmic tail). Interacts with ACT1 (F-actin).

It is found in the cytoplasm. The enzyme catalyses beta-D-fructose 1,6-bisphosphate = D-glyceraldehyde 3-phosphate + dihydroxyacetone phosphate. Its pathway is carbohydrate degradation; glycolysis; D-glyceraldehyde 3-phosphate and glycerone phosphate from D-glucose: step 4/4. In terms of biological role, plays a key role in glycolysis by catalyzing the cleavage of fructose 1,6-bisphosphate into dihydroxyacetone phosphate and glyceraldehyde 3-phosphate. Forms a bridge between cell surface adhesins and the actin cytoskeleton. Required for parasite invasion of host cells. This chain is Fructose-bisphosphate aldolase 1, found in Toxoplasma gondii.